Here is a 453-residue protein sequence, read N- to C-terminus: Pentatricopeptide repeat-containing protein At2g38420, mitochondrial (453 aa).

The transit peptide at 1–77 (MARSSSWHRM…CEPTPQAYRF (77 aa)) directs the protein to the mitochondrion. 9 PPR repeats span residues 107–141 (PESI…RCVP), 142–177 (SAYT…GVRL), 178–212 (EEST…SVIV), 213–249 (DPRL…RFSP), 250–284 (GLRD…RVEP), 285–319 (DLVC…GLAP), 320–354 (DVYT…GSEP), 355–389 (NVVT…GVNR), and 390–424 (NSHT…NVFV).

Belongs to the PPR family. P subfamily.

It localises to the mitochondrion. In Arabidopsis thaliana (Mouse-ear cress), this protein is Pentatricopeptide repeat-containing protein At2g38420, mitochondrial.